The following is a 316-amino-acid chain: MTPTNQIHNALYLPFQREQWAELRESVPLTLSENDLADLRGINEKISLSEVTDIYLPLSRLLNLNVGAKQQRGLALNEFLGRVPPKRPYIISIAGSVAVGKSTTARILQALLSHWPEHPKVDLITTDGFLHPLAELKRRGLMQRKGFPESYDMKGLVDFISAIKAGEAAVSAPIYSHITYDRVPDQFQWIRQPDILIIEGLNVLQTGQDSAVDTKRPFVSDFVDFSIYVDAEEELLKKWYIERFLQFRTGAFSEESSYFHHYSQLTDHEATGIASKIWDSINGPNLTLNIQPTRERAHLILQKGQDHLMDQVLLRK.

95–102 (GSVAVGKS) is an ATP binding site.

The protein belongs to the prokaryotic pantothenate kinase family.

It is found in the cytoplasm. It catalyses the reaction (R)-pantothenate + ATP = (R)-4'-phosphopantothenate + ADP + H(+). The protein operates within cofactor biosynthesis; coenzyme A biosynthesis; CoA from (R)-pantothenate: step 1/5. This Shewanella piezotolerans (strain WP3 / JCM 13877) protein is Pantothenate kinase.